The following is a 140-amino-acid chain: Class I hydrophobin 1 (140 aa).

The N-terminal stretch at 1-18 (MKFAAVVVLAAAAAAVSA) is a signal peptide. A disordered region spans residues 22 to 60 (AQRMARGLPPKAPIRRHGTPADTEKRSHPSSTGGGQCNT). Disulfide bonds link Cys58–Cys119, Cys65–Cys113, Cys66–Cys99, and Cys120–Cys133.

The protein belongs to the fungal hydrophobin family. As to quaternary structure, self-assembles to form functional amyloid fibrils called rodlets. Self-assembly into fibrillar rodlets occurs spontaneously at hydrophobic:hydrophilic interfaces and the rodlets further associate laterally to form amphipathic monolayers.

It localises to the secreted. Its subcellular location is the cell wall. Aerial growth, conidiation, and dispersal of filamentous fungi in the environment rely upon a capability of their secreting small amphipathic proteins called hydrophobins (HPBs) with low sequence identity. Class I can self-assemble into an outermost layer of rodlet bundles on aerial cell surfaces, conferring cellular hydrophobicity that supports fungal growth, development and dispersal; whereas Class II form highly ordered films at water-air interfaces through intermolecular interactions but contribute nothing to the rodlet structure. This chain is Class I hydrophobin 1, found in Pisolithus tinctorius (Dead man's foot).